A 93-amino-acid chain; its full sequence is MEQGKGAINTMDDILNVFNEFIAEFESYNDMVKVKSVPPPTPPKPVKKTPSPTLPKPSKQKQEPQVEVNEDRESVSNLLKKFKDSPLILCGHS.

Residues 35 to 72 (KSVPPPTPPKPVKKTPSPTLPKPSKQKQEPQVEVNEDR) form a disordered region. The segment covering 60–72 (QKQEPQVEVNEDR) has biased composition (basic and acidic residues).

This is an uncharacterized protein from Ostreid herpesvirus 1 (isolate France) (OsHV-1).